Here is a 203-residue protein sequence, read N- to C-terminus: Glycerol-3-phosphate acyltransferase (203 aa).

The next 4 membrane-spanning stretches (helical) occupy residues 6-26 (LTLL…AVLV), 82-102 (AISL…PIFF), 118-138 (APIG…LVLI), and 141-161 (YSSL…WWLD).

It belongs to the PlsY family. Probably interacts with PlsX.

It localises to the cell inner membrane. It carries out the reaction an acyl phosphate + sn-glycerol 3-phosphate = a 1-acyl-sn-glycero-3-phosphate + phosphate. Its pathway is lipid metabolism; phospholipid metabolism. Its function is as follows. Catalyzes the transfer of an acyl group from acyl-phosphate (acyl-PO(4)) to glycerol-3-phosphate (G3P) to form lysophosphatidic acid (LPA). This enzyme utilizes acyl-phosphate as fatty acyl donor, but not acyl-CoA or acyl-ACP. This Shewanella sp. (strain MR-4) protein is Glycerol-3-phosphate acyltransferase.